The following is a 363-amino-acid chain: F-box protein At3g44326 (363 aa).

Positions 1–23 are disordered; it reads MLSSSSSSTVEQPSRGGSPGINA. Positions 27–66 constitute an F-box domain; that stretch reads DVLRSNILTRLDGSSLAALSCTCSNLNSFCSDESLWRQQC.

This chain is F-box protein At3g44326, found in Arabidopsis thaliana (Mouse-ear cress).